The sequence spans 453 residues: MDLVIMNFVFLLYLTSVVKCSIKLDFNKVSTPSKYTKRDALPMPLINDKILYTTELEIGSNKDKVSVSIDTGSYDLWVMSNDAVCYKVSEFQTEGAPQLPDIFNDIDQDYSCTFNGTYNSKSSKTFKNTSEDFSIGYVDGSAAQGVWGYDSVQFGQYGVTGLKIGIANRSSVSDGILGIGIANGYDNFPVLLQKQGLINKIAYSVYLNSSNSTTGTILFGAIDHAKYKGALSTVPVDSKSQLSVNVTNLKTKNGNVASGGHSILLDTGSTFSIFPDEWIDALGHSLNATYDEDESVYEIECDGYDEHFFGFSIGDSDFSVPIQDLKTEKDGQCYLAIMSNSVIGGGGILFGDDILRQIYLVYDLQDMTISVAPVVYTEDEDIEEILNPNEDQNEVPTSTSFTQSASSSGSQPSSTISGENMDKNTTSSSSGNCQTRSWIAILSALFLVYIHII.

The N-terminal stretch at 1-20 (MDLVIMNFVFLLYLTSVVKC) is a signal peptide. The 321-residue stretch at 52-372 (YTTELEIGSN…DLQDMTISVA (321 aa)) folds into the Peptidase A1 domain. Residue aspartate 70 is part of the active site. Residue 70–72 (DTG) coordinates pepstatin A. An intrachain disulfide couples cysteine 85 to cysteine 112. N-linked (GlcNAc...) asparagine glycosylation is found at asparagine 115 and asparagine 128. Residue 138–139 (VD) participates in pepstatin A binding. Asparagine 168, asparagine 208, asparagine 211, and asparagine 245 each carry an N-linked (GlcNAc...) asparagine glycan. Aspartate 266 is an active-site residue. 266-270 (DTGST) is a binding site for pepstatin A. Asparagine 287 is a glycosylation site (N-linked (GlcNAc...) asparagine). Cysteine 301 and cysteine 333 are disulfide-bonded. Positions 387 to 432 (NPNEDQNEVPTSTSFTQSASSSGSQPSSTISGENMDKNTTSSSSGN) are disordered. Positions 397 to 417 (TSTSFTQSASSSGSQPSSTIS) are enriched in low complexity. Residues 423 to 432 (KNTTSSSSGN) are compositionally biased toward polar residues. Asparagine 424 is a glycosylation site (N-linked (GlcNAc...) asparagine). A lipid anchor (GPI-anchor amidated serine) is attached at serine 429. Residues 430–453 (SGNCQTRSWIAILSALFLVYIHII) constitute a propeptide, removed in mature form.

It belongs to the peptidase A1 family. Post-translationally, the GPI-anchor is attached to the protein in the endoplasmic reticulum and serves to target the protein to the cell surface. There, the glucosamine-inositol phospholipid moiety is cleaved off and the GPI-modified mannoprotein is covalently attached via its lipidless GPI glycan remnant to the 1,6-beta-glucan of the outer cell wall layer.

Its subcellular location is the secreted. The protein resides in the cell membrane. It catalyses the reaction Preferential cleavage at the carboxyl of hydrophobic amino acids, but fails to cleave 15-Leu-|-Tyr-16, 16-Tyr-|-Leu-17 and 24-Phe-|-Phe-25 of insulin B chain. Activates trypsinogen, and degrades keratin.. Its function is as follows. Secreted aspartic peptidases (SAPs) are a group of ten acidic hydrolases considered as key virulence factors. These enzymes supply the fungus with nutrient amino acids as well as are able to degrade the selected host's proteins involved in the immune defense. Required for cell surface integrity and cell separation during budding. This is Secreted aspartic protease 10 from Candida albicans (strain SC5314 / ATCC MYA-2876) (Yeast).